Reading from the N-terminus, the 290-residue chain is 4-hydroxybenzoate octaprenyltransferase (290 aa).

The next 8 membrane-spanning stretches (helical) occupy residues 23–43, 46–66, 99–119, 141–161, 163–183, 212–232, 233–253, and 268–288; these read IGAL…TPGM, LWIL…GCVV, LFVV…AMTI, LPQV…FAAV, ESLP…AVAY, TLII…IGWL, NGLG…FVYQ, and AFMN…MSYW.

It belongs to the UbiA prenyltransferase family. Mg(2+) is required as a cofactor.

Its subcellular location is the cell inner membrane. It carries out the reaction all-trans-octaprenyl diphosphate + 4-hydroxybenzoate = 4-hydroxy-3-(all-trans-octaprenyl)benzoate + diphosphate. It functions in the pathway cofactor biosynthesis; ubiquinone biosynthesis. Catalyzes the prenylation of para-hydroxybenzoate (PHB) with an all-trans polyprenyl group. Mediates the second step in the final reaction sequence of ubiquinone-8 (UQ-8) biosynthesis, which is the condensation of the polyisoprenoid side chain with PHB, generating the first membrane-bound Q intermediate 3-octaprenyl-4-hydroxybenzoate. This Salmonella paratyphi C (strain RKS4594) protein is 4-hydroxybenzoate octaprenyltransferase.